The sequence spans 254 residues: Pimeloyl-[acyl-carrier protein] methyl ester esterase (254 aa).

Residues 16–242 (LVLIHGWGMN…ASHAPFISHP (227 aa)) enclose the AB hydrolase-1 domain. Residues Trp22, 82 to 83 (SL), and 143 to 147 (FLALQ) contribute to the substrate site. Ser82 acts as the Nucleophile in catalysis. Active-site residues include Asp207 and His235. His235 lines the substrate pocket.

Belongs to the AB hydrolase superfamily. Carboxylesterase BioH family. In terms of assembly, monomer.

Its subcellular location is the cytoplasm. It carries out the reaction 6-carboxyhexanoyl-[ACP] methyl ester + H2O = 6-carboxyhexanoyl-[ACP] + methanol + H(+). The protein operates within cofactor biosynthesis; biotin biosynthesis. Functionally, the physiological role of BioH is to remove the methyl group introduced by BioC when the pimeloyl moiety is complete. It allows to synthesize pimeloyl-ACP via the fatty acid synthetic pathway through the hydrolysis of the ester bonds of pimeloyl-ACP esters. This Photobacterium profundum (strain SS9) protein is Pimeloyl-[acyl-carrier protein] methyl ester esterase.